The chain runs to 142 residues: Large ribosomal subunit protein uL13 (142 aa).

It belongs to the universal ribosomal protein uL13 family. In terms of assembly, part of the 50S ribosomal subunit.

Its function is as follows. This protein is one of the early assembly proteins of the 50S ribosomal subunit, although it is not seen to bind rRNA by itself. It is important during the early stages of 50S assembly. This Psychrobacter sp. (strain PRwf-1) protein is Large ribosomal subunit protein uL13.